Here is a 1028-residue protein sequence, read N- to C-terminus: MEPGKETAATSEQKPRPTLRASNTNRQPKVKRRKKDLEELKKEVVMDDHKLTLDELSAKYSVDLTKGLSVTDAQEILTLNGPNVLTPPPTTPEWIKFCKQLFGGFSLLLWTGSLLCFLAYGIHVSYYQENANKDNLYLGIVLSAVVIITGCFSYYQEAKSSKIMESFKTMVPQQALVIRDGEKMQINVRDVVLGDLVEVKGGDQVPADIRVIAAQGCKVDNSSLTGESEPQSRCPDCTHENPLETRNIIFFSTNCVEGTARGVVIATGDHTVMGRIASLTSGLTMGKTPIATEIEHFIHIITAVAVFLGVTFFFLSLILGYTWLDAVIFLIGIIVANVPEGLLATVTVCLTLTAKRMARKNCLVKNLEAVETLGSTSTICSDKTGTLTQNRMTVAHLWFDKTVYEADTSEEQTTGKTFPKSSDTWFYLARIAGLCNRADFKPHQESLPITKRTTTGDASESALLKFIEQSYSPVSEMRQKNPKVAEIPFNSTNKYQMSIHLLEDNSEAHVLLMKGAPERILDFCSSFLLNGQEYPMDEEMKTDFQNAYIELGGLGERVLGFCFLNLPSNFSKGFQFNTEELNFPMENLCFAGLISMIDPPRTAVPDAVSKCRSAGIKVIMVTGDHPITAKAIAKSVGIISEANETAEDIAARLNISISQVSNKSIKAIVVHGSELKDMDSGQLDNILKSYKEIVFARTSPQQKLIIVEGCQRLGAIVAVTGDGVNDSPALKKADIGIAMGITGSDVSKQAADMILLDDNFASIVTGVEEGRLIFDNLKKSIAYTLTSNIPEITPFLLFIVLSIPLPLGTITILCIDLGTDMVPAISLAYETPESDIMKRLPRNPKTDNLVNDRLIGMAYGQIGMIQALAGFFTYFVILAENGFKPLDLLGIRLYWDDTNLNDLEDTYGQQWTYEQRKVVEFTCQTAFFISIVIVQWADLIICKTRRNSLFKQGMKNKVLIFGLLEETILAACLSYIPGMDVALRMYPLKINWWFCALPYSVLIFIYDEVRKLIIRRRPGGWLEKETYY.

The interval 1–36 (MEPGKETAATSEQKPRPTLRASNTNRQPKVKRRKKD) is disordered. At 1 to 92 (MEPGKETAAT…NVLTPPPTTP (92 aa)) the chain is on the cytoplasmic side. An interaction with phosphoinositide-3 kinase region spans residues 87 to 89 (PPP). Residues 93 to 113 (EWIKFCKQLFGGFSLLLWTGS) traverse the membrane as a helical segment. Over 114 to 137 (LLCFLAYGIHVSYYQENANKDNLY) the chain is Extracellular. The chain crosses the membrane as a helical span at residues 138–158 (LGIVLSAVVIITGCFSYYQEA). Topologically, residues 159–294 (KSSKIMESFK…MGKTPIATEI (136 aa)) are cytoplasmic. The helical transmembrane segment at 295–314 (EHFIHIITAVAVFLGVTFFF) threads the bilayer. The Extracellular portion of the chain corresponds to 315–326 (LSLILGYTWLDA). The chain crosses the membrane as a helical span at residues 327-344 (VIFLIGIIVANVPEGLLA). Over 345-777 (TVTVCLTLTA…EEGRLIFDNL (433 aa)) the chain is Cytoplasmic. Asp-382 acts as the 4-aspartylphosphate intermediate in catalysis. Mg(2+)-binding residues include Asp-722 and Asp-726. A helical membrane pass occupies residues 778 to 797 (KKSIAYTLTSNIPEITPFLL). Topologically, residues 798–807 (FIVLSIPLPL) are extracellular. The helical transmembrane segment at 808–828 (GTITILCIDLGTDMVPAISLA) threads the bilayer. Residues 829-848 (YETPESDIMKRLPRNPKTDN) lie on the Cytoplasmic side of the membrane. Residues 849 to 871 (LVNDRLIGMAYGQIGMIQALAGF) traverse the membrane as a helical segment. The Extracellular portion of the chain corresponds to 872–923 (FTYFVILAENGFKPLDLLGIRLYWDDTNLNDLEDTYGQQWTYEQRKVVEFTC). The helical transmembrane segment at 924–943 (QTAFFISIVIVQWADLIICK) threads the bilayer. Topologically, residues 944–956 (TRRNSLFKQGMKN) are cytoplasmic. At Ser-948 the chain carries Phosphoserine; by PKA. A helical membrane pass occupies residues 957 to 975 (KVLIFGLLEETILAACLSY). Residues 976 to 990 (IPGMDVALRMYPLKI) lie on the Extracellular side of the membrane. A helical transmembrane segment spans residues 991 to 1011 (NWWFCALPYSVLIFIYDEVRK). Residues 1012–1028 (LIIRRRPGGWLEKETYY) lie on the Cytoplasmic side of the membrane.

It belongs to the cation transport ATPase (P-type) (TC 3.A.3) family. Type IIC subfamily. The sodium/potassium-transporting ATPase is composed of a catalytic alpha subunit, an auxiliary non-catalytic beta subunit and an additional regulatory subunit.

The protein localises to the cell membrane. The catalysed reaction is K(+)(out) + Na(+)(in) + ATP + H2O = K(+)(in) + Na(+)(out) + ADP + phosphate + H(+). With respect to regulation, specifically inhibited by an endogenous cardiac glycoside, ouabain. Its function is as follows. This is the catalytic component of the active enzyme, which catalyzes the hydrolysis of ATP coupled with the exchange of sodium and potassium ions across the plasma membrane. This action creates the electrochemical gradient of sodium and potassium ions, providing the energy for active transport of various nutrients. Plays a role in sperm motility. The polypeptide is Sodium/potassium-transporting ATPase subunit alpha-4 (Atp1a4) (Rattus norvegicus (Rat)).